The sequence spans 181 residues: Coatomer subunit zeta-3 (181 aa).

This sequence belongs to the adaptor complexes small subunit family. Oligomeric complex that consists of at least the alpha, beta, beta', gamma, delta, epsilon and zeta subunits.

The protein resides in the cytoplasm. The protein localises to the golgi apparatus membrane. It is found in the cytoplasmic vesicle. It localises to the COPI-coated vesicle membrane. The coatomer is a cytosolic protein complex that binds to dilysine motifs and reversibly associates with Golgi non-clathrin-coated vesicles, which further mediate biosynthetic protein transport from the ER, via the Golgi up to the trans Golgi network. Coatomer complex is required for budding from Golgi membranes, and is essential for the retrograde Golgi-to-ER transport of dilysine-tagged proteins. The zeta subunit may be involved in regulating the coat assembly and, hence, the rate of biosynthetic protein transport due to its association-dissociation properties with the coatomer complex. The sequence is that of Coatomer subunit zeta-3 from Arabidopsis thaliana (Mouse-ear cress).